A 469-amino-acid chain; its full sequence is GTPase Der (469 aa).

EngA-type G domains follow at residues 3–167 and 175–348; these read PTVA…PDEV and PKFA…RAAM. GTP contacts are provided by residues 9 to 16, 56 to 60, 119 to 122, 181 to 188, 228 to 232, and 293 to 296; these read GRPNVGKS, DTGGF, NKAE, DTAGV, and NKWD. In terms of domain architecture, KH-like spans 349 to 433; sequence SKLATPKLTR…PLRVQYKSSE (85 aa). Residues 429 to 469 form a disordered region; it reads YKSSENPFDNDEKDKPRAKPKPMSKMRGREKEVRYGKNSKK.

The protein belongs to the TRAFAC class TrmE-Era-EngA-EngB-Septin-like GTPase superfamily. EngA (Der) GTPase family. In terms of assembly, associates with the 50S ribosomal subunit.

Functionally, GTPase that plays an essential role in the late steps of ribosome biogenesis. This Chromobacterium violaceum (strain ATCC 12472 / DSM 30191 / JCM 1249 / CCUG 213 / NBRC 12614 / NCIMB 9131 / NCTC 9757 / MK) protein is GTPase Der.